The chain runs to 336 residues: Deoxyhypusine hydroxylase (336 aa).

2 HEAT-like PBS-type repeats span residues 68–94 (LKHE…VVQD) and 101–127 (CRHE…LRDN). Fe cation-binding residues include His-70, Glu-71, His-103, and Glu-104. Residues 158-179 (LKPSDFTSIDPAPPMPLTAKEP) are disordered. HEAT-like PBS-type repeat units follow at residues 235 to 261 (FRHE…TLSD) and 268 to 295 (VRHE…FLND). 4 residues coordinate Fe cation: His-237, Glu-238, His-270, and Glu-271.

This sequence belongs to the deoxyhypusine hydroxylase family. Fe(2+) is required as a cofactor.

It is found in the cytoplasm. It localises to the nucleus. It carries out the reaction [eIF5A protein]-deoxyhypusine + AH2 + O2 = [eIF5A protein]-hypusine + A + H2O. Its pathway is protein modification; eIF5A hypusination. Its function is as follows. Catalyzes the hydroxylation of the N(6)-(4-aminobutyl)-L-lysine intermediate to form hypusine, an essential post-translational modification only found in mature eIF-5A factor. The sequence is that of Deoxyhypusine hydroxylase (lia1) from Emericella nidulans (strain FGSC A4 / ATCC 38163 / CBS 112.46 / NRRL 194 / M139) (Aspergillus nidulans).